Here is a 115-residue protein sequence, read N- to C-terminus: Small nuclear ribonucleoprotein Sm D2 (115 aa).

Positions Leu-30–Ala-115 constitute a Sm domain.

Belongs to the snRNP core protein family. In terms of assembly, belongs to the 40S cdc5-associated complex (or cwf complex), a spliceosome sub-complex reminiscent of a late-stage spliceosome composed of the U2, U5 and U6 snRNAs and at least brr2, cdc5, cwf2/prp3, cwf3/syf1, cwf4/syf3, cwf5/ecm2, spp42/cwf6, cwf7/spf27, cwf8, cwf9, cwf10, cwf11, cwf12, prp45/cwf13, cwf14, cwf15, cwf16, cwf17, cwf18, cwf19, cwf20, cwf21, cwf22, cwf23, cwf24, cwf25, cwf26, cyp7/cwf27, cwf28, cwf29/ist3, lea1, msl1, prp5/cwf1, prp10, prp12/sap130, prp17, prp22, sap61, sap62, sap114, sap145, slu7, smb1, smd1, smd3, smf1, smg1 and syf2.

The protein localises to the nucleus. It is found in the cytoplasm. Its subcellular location is the cytosol. Plays a role in pre-mRNA splicing as a core component of the spliceosomal U1, U2, U4 and U5 small nuclear ribonucleoproteins (snRNPs), the building blocks of the spliceosome. This chain is Small nuclear ribonucleoprotein Sm D2 (smd2), found in Schizosaccharomyces pombe (strain 972 / ATCC 24843) (Fission yeast).